Reading from the N-terminus, the 121-residue chain is Small ribosomal subunit protein uS13 (121 aa).

Residues arginine 92 to lysine 121 are disordered.

This sequence belongs to the universal ribosomal protein uS13 family. Part of the 30S ribosomal subunit. Forms a loose heterodimer with protein S19. Forms two bridges to the 50S subunit in the 70S ribosome.

Its function is as follows. Located at the top of the head of the 30S subunit, it contacts several helices of the 16S rRNA. In the 70S ribosome it contacts the 23S rRNA (bridge B1a) and protein L5 of the 50S subunit (bridge B1b), connecting the 2 subunits; these bridges are implicated in subunit movement. Contacts the tRNAs in the A and P-sites. The chain is Small ribosomal subunit protein uS13 from Janthinobacterium sp. (strain Marseille) (Minibacterium massiliensis).